A 237-amino-acid polypeptide reads, in one-letter code: Peptidase E (237 aa).

Residues Ser122, Asp137, and His159 each act as charge relay system in the active site.

This sequence belongs to the peptidase S51 family.

Its subcellular location is the cytoplasm. It catalyses the reaction Dipeptidase E catalyzes the hydrolysis of dipeptides Asp-|-Xaa. It does not act on peptides with N-terminal Glu, Asn or Gln, nor does it cleave isoaspartyl peptides.. Its function is as follows. Hydrolyzes dipeptides containing N-terminal aspartate residues. May play a role in allowing the cell to use peptide aspartate to spare carbon otherwise required for the synthesis of the aspartate family of amino acids. This is Peptidase E from Shewanella baltica (strain OS155 / ATCC BAA-1091).